We begin with the raw amino-acid sequence, 237 residues long: MRPSKRAADAMRDVTLERAVARYAEGSCLVTFGNTRVLCTASLEERGPPWLRGSGKGWVTAEYAMLPRATHERTRREVNSGKPSGRTQEIQRLIGRSLRAVTNLPALGERQITVDCDVIQADGGTRTASITGAWVALHDCFAWMRARSIISVDPLKDHVAAVSCGIYKGQPVLDLDYAEDSAAETDANFVVTGKGGIVEVQGTAELEPFTDEQFLELLRLAKGGVAGLVELQRKAIA.

Residues Arg-86 and Gly-124–Arg-126 contribute to the phosphate site.

It belongs to the RNase PH family. Homohexameric ring arranged as a trimer of dimers.

The catalysed reaction is tRNA(n+1) + phosphate = tRNA(n) + a ribonucleoside 5'-diphosphate. Phosphorolytic 3'-5' exoribonuclease that plays an important role in tRNA 3'-end maturation. Removes nucleotide residues following the 3'-CCA terminus of tRNAs; can also add nucleotides to the ends of RNA molecules by using nucleoside diphosphates as substrates, but this may not be physiologically important. Probably plays a role in initiation of 16S rRNA degradation (leading to ribosome degradation) during starvation. This Methylorubrum extorquens (strain CM4 / NCIMB 13688) (Methylobacterium extorquens) protein is Ribonuclease PH.